A 195-amino-acid polypeptide reads, in one-letter code: L-rhamnose-binding lectin CSL2 (195 aa).

2 SUEL-type lectin domains span residues 1 to 97 (TRVV…YTCL) and 104 to 195 (TCEG…YTCG).

L-rhamnose binding lectin. Has hemagglutinating activity towards rabbit erythrocytes and human type B erythrocytes. Hemagglutinating activity is inhibited by smooth-type lipopolysaccharide (LPS) from S.flexneri 1A and E.coli K12, but not by rough-type LPS from S.flexneri, E.coli K12 and E.coli EH100. Agglutinates E.coli K12 and B.subtilis. The protein is L-rhamnose-binding lectin CSL2 of Oncorhynchus keta (Chum salmon).